Here is a 101-residue protein sequence, read N- to C-terminus: Small ribosomal subunit protein uS14 (101 aa).

The protein belongs to the universal ribosomal protein uS14 family. As to quaternary structure, part of the 30S ribosomal subunit. Contacts proteins S3 and S10.

Its function is as follows. Binds 16S rRNA, required for the assembly of 30S particles and may also be responsible for determining the conformation of the 16S rRNA at the A site. The sequence is that of Small ribosomal subunit protein uS14 from Colwellia psychrerythraea (strain 34H / ATCC BAA-681) (Vibrio psychroerythus).